A 505-amino-acid chain; its full sequence is ATP synthase subunit beta (505 aa).

Residue 158 to 165 participates in ATP binding; that stretch reads GGAGVGKT.

Belongs to the ATPase alpha/beta chains family. As to quaternary structure, F-type ATPases have 2 components, CF(1) - the catalytic core - and CF(0) - the membrane proton channel. CF(1) has five subunits: alpha(3), beta(3), gamma(1), delta(1), epsilon(1). CF(0) has three main subunits: a(1), b(2) and c(9-12). The alpha and beta chains form an alternating ring which encloses part of the gamma chain. CF(1) is attached to CF(0) by a central stalk formed by the gamma and epsilon chains, while a peripheral stalk is formed by the delta and b chains.

It is found in the cell inner membrane. The enzyme catalyses ATP + H2O + 4 H(+)(in) = ADP + phosphate + 5 H(+)(out). In terms of biological role, produces ATP from ADP in the presence of a proton gradient across the membrane. The catalytic sites are hosted primarily by the beta subunits. The sequence is that of ATP synthase subunit beta from Parabacteroides distasonis (strain ATCC 8503 / DSM 20701 / CIP 104284 / JCM 5825 / NCTC 11152).